Reading from the N-terminus, the 501-residue chain is Solute carrier family 2, facilitated glucose transporter member 5 (501 aa).

Residue Met-1 is modified to N-acetylmethionine. At 1–18 (MEQQDPIKKEGRLTPVLA) the chain is on the cytoplasmic side. A helical transmembrane segment spans residues 19 to 39 (LATLIAAFGSSFQYGYNVAAV). Tyr-32 provides a ligand contact to D-fructose. The Extracellular segment spans residues 40–68 (NSPAELMKAFYNETHYSRFSEYISEFSLT). The N-linked (GlcNAc...) asparagine glycan is linked to Asn-51. A helical transmembrane segment spans residues 69-91 (LLWSISVSMFPFGGFVGSLMVGP). Over 92–98 (LVNRLGR) the chain is Cytoplasmic. A helical membrane pass occupies residues 99 to 119 (KGTLLFNNIFSIVPAILMGTS). Residues 120–126 (KTARSYE) are Extracellular-facing. The chain crosses the membrane as a helical span at residues 127-149 (MIILSRLLVGICAGLSSNVVPMY). Residues 150–161 (LGELSPKNLRGA) lie on the Cytoplasmic side of the membrane. The helical transmembrane segment at 162 to 182 (LGVVPQLFITVGILVAQIVGL) threads the bilayer. Gln-167 contributes to the D-fructose binding site. The Extracellular segment spans residues 183-192 (RSLLATEEGW). Residues 193-213 (PILLGLTAIPAALQLLLLPFF) form a helical membrane-spanning segment. Over 214–277 (PESPRYLLIQ…MFRMRSLRWQ (64 aa)) the chain is Cytoplasmic. The helical transmembrane segment at 278–298 (VISIIILMGGQQLSGVNAIYY) threads the bilayer. D-fructose-binding positions include Gln-288 and 296–298 (IYY). Over 299-313 (YADQIYLSAGVKDQD) the chain is Extracellular. The helical transmembrane segment at 314 to 334 (VQYVTVGTGAVNVLMTICAVF) threads the bilayer. The Cytoplasmic segment spans residues 335 to 342 (VVEYLGRR). The chain crosses the membrane as a helical span at residues 343–363 (ALLLLGFSVCFIACCVLTVAL). Over 364-371 (ALQDRVSW) the chain is Extracellular. A helical transmembrane segment spans residues 372 to 394 (MPYISIVCVISYVIGHALGPSPI). Residue His-387 coordinates D-fructose. The Cytoplasmic portion of the chain corresponds to 395 to 412 (PALLITEVFLQSSRSAAY). Residues 413 to 433 (MVGGTVHWLSNFAVGLVFPFI) form a helical membrane-spanning segment. 419 to 420 (HW) lines the D-fructose pocket. The Extracellular segment spans residues 434–439 (QVGLGA). Residues 440 to 460 (YSFIIFAVICLLTTIYIFLIV) form a helical membrane-spanning segment. Residues 461–501 (PETKGKTFVEINHIFTKMNKVSDVHPAKDELKDIPLSAVEL) lie on the Cytoplasmic side of the membrane.

Belongs to the major facilitator superfamily. Sugar transporter (TC 2.A.1.1) family. Glucose transporter subfamily.

The protein localises to the apical cell membrane. It is found in the cell membrane. Its subcellular location is the sarcolemma. The catalysed reaction is D-fructose(out) = D-fructose(in). Functions as a fructose transporter that has only low activity with other monosaccharides. Can mediate the uptake of deoxyglucose, but with low efficiency. Essential for fructose uptake in the small intestine. Plays a role in the regulation of salt uptake and blood pressure in response to dietary fructose. Required for the development of high blood pressure in response to high dietary fructose intake. The sequence is that of Solute carrier family 2, facilitated glucose transporter member 5 from Equus caballus (Horse).